The following is a 188-amino-acid chain: Threonylcarbamoyl-AMP synthase (188 aa).

One can recognise a YrdC-like domain in the interval 3–188 (QLHPSDIKDI…RSGKILRNGQ (186 aa)).

This sequence belongs to the SUA5 family. TsaC subfamily.

Its subcellular location is the cytoplasm. The catalysed reaction is L-threonine + hydrogencarbonate + ATP = L-threonylcarbamoyladenylate + diphosphate + H2O. Required for the formation of a threonylcarbamoyl group on adenosine at position 37 (t(6)A37) in tRNAs that read codons beginning with adenine. Catalyzes the conversion of L-threonine, HCO(3)(-)/CO(2) and ATP to give threonylcarbamoyl-AMP (TC-AMP) as the acyladenylate intermediate, with the release of diphosphate. This is Threonylcarbamoyl-AMP synthase from Shewanella baltica (strain OS155 / ATCC BAA-1091).